Consider the following 45-residue polypeptide: NLR family pyrin domain-containing protein 2B (45 aa).

Expressed in all tissues tested, including spleen, lymph node, thymus, tonsil, peripheral blood leukocyte, bone marrow, liver, heart, brain, placenta, lung, skeletal muscle, kidney and pancreas.

It localises to the cytoplasm. Its subcellular location is the nucleus. Its function is as follows. May function as a negative regulator of NF-kappa-B by preventing RELA/p65 phosphorylation at 'Ser-536', thereby inhibiting its transcriptional activity. Through NF-kappa-B regulation may control cytokine release upon Toll-like receptors activation and therefore play a role in modulation of innate immunity. May also play a role in cell cycle progression and apoptotic process. The polypeptide is NLR family pyrin domain-containing protein 2B (Homo sapiens (Human)).